The following is an 89-amino-acid chain: uncharacterized protein (89 aa).

The region spanning Met1 to Leu89 is the HTH arsR-type domain.

This is an uncharacterized protein from Methanocaldococcus jannaschii (strain ATCC 43067 / DSM 2661 / JAL-1 / JCM 10045 / NBRC 100440) (Methanococcus jannaschii).